A 338-amino-acid chain; its full sequence is 3-dehydroquinate synthase (338 aa).

The protein belongs to the archaeal-type DHQ synthase family.

It carries out the reaction 2-amino-2,3,7-trideoxy-D-lyxo-hept-6-ulosonate + NAD(+) + H2O = 3-dehydroquinate + NH4(+) + NADH + H(+). Its function is as follows. Catalyzes the oxidative deamination and cyclization of 2-amino-3,7-dideoxy-D-threo-hept-6-ulosonic acid (ADH) to yield 3-dehydroquinate (DHQ), which is fed into the canonical shikimic pathway of aromatic amino acid biosynthesis. This chain is 3-dehydroquinate synthase, found in Cenarchaeum symbiosum (strain A).